An 848-amino-acid polypeptide reads, in one-letter code: Translation initiation factor IF-2 (848 aa).

Positions 1–20 (MNESKGAVDSGLMSGKTERT) are disordered. One can recognise a tr-type G domain in the interval 346–516 (PRAPVVTVMG…LLMAELLELK (171 aa)). A G1 region spans residues 355-362 (GHVDHGKT). 355-362 (GHVDHGKT) provides a ligand contact to GTP. The G2 stretch occupies residues 380 to 384 (GITQH). The segment at 402–405 (DTPG) is G3. GTP-binding positions include 402–406 (DTPGH) and 456–459 (NKID). Residues 456–459 (NKID) form a G4 region. The interval 492 to 494 (SAK) is G5.

This sequence belongs to the TRAFAC class translation factor GTPase superfamily. Classic translation factor GTPase family. IF-2 subfamily.

It localises to the cytoplasm. Its function is as follows. One of the essential components for the initiation of protein synthesis. Protects formylmethionyl-tRNA from spontaneous hydrolysis and promotes its binding to the 30S ribosomal subunits. Also involved in the hydrolysis of GTP during the formation of the 70S ribosomal complex. The sequence is that of Translation initiation factor IF-2 from Ehrlichia canis (strain Jake).